The primary structure comprises 276 residues: S-adenosylmethionine decarboxylase proenzyme (276 aa).

The active-site Schiff-base intermediate with substrate; via pyruvic acid is S124. The residue at position 124 (S124) is a Pyruvic acid (Ser); by autocatalysis. H129 (proton acceptor; for processing activity) is an active-site residue. C152 serves as the catalytic Proton donor; for catalytic activity.

Belongs to the prokaryotic AdoMetDC family. Type 2 subfamily. As to quaternary structure, heterooctamer of four alpha and four beta chains arranged as a tetramer of alpha/beta heterodimers. Pyruvate serves as cofactor. Post-translationally, is synthesized initially as an inactive proenzyme. Formation of the active enzyme involves a self-maturation process in which the active site pyruvoyl group is generated from an internal serine residue via an autocatalytic post-translational modification. Two non-identical subunits are generated from the proenzyme in this reaction, and the pyruvate is formed at the N-terminus of the alpha chain, which is derived from the carboxyl end of the proenzyme. The post-translation cleavage follows an unusual pathway, termed non-hydrolytic serinolysis, in which the side chain hydroxyl group of the serine supplies its oxygen atom to form the C-terminus of the beta chain, while the remainder of the serine residue undergoes an oxidative deamination to produce ammonia and the pyruvoyl group blocking the N-terminus of the alpha chain.

It carries out the reaction S-adenosyl-L-methionine + H(+) = S-adenosyl 3-(methylsulfanyl)propylamine + CO2. It participates in amine and polyamine biosynthesis; S-adenosylmethioninamine biosynthesis; S-adenosylmethioninamine from S-adenosyl-L-methionine: step 1/1. Its function is as follows. Catalyzes the decarboxylation of S-adenosylmethionine to S-adenosylmethioninamine (dcAdoMet), the propylamine donor required for the synthesis of the polyamines spermine and spermidine from the diamine putrescine. This chain is S-adenosylmethionine decarboxylase proenzyme, found in Desulfitobacterium hafniense (strain DSM 10664 / DCB-2).